The chain runs to 228 residues: Ion-translocating oxidoreductase complex subunit E (228 aa).

Helical transmembrane passes span 18–38, 69–89, 92–112, 125–145, and 182–202; these read ALVQ…ATNA, IPIY…LINA, FGLY…CIVV, LLSA…MFVL, and PFLL…MLAV.

Belongs to the NqrDE/RnfAE family. As to quaternary structure, the complex is composed of six subunits: RnfA, RnfB, RnfC, RnfD, RnfE and RnfG.

The protein resides in the cell inner membrane. Its function is as follows. Part of a membrane-bound complex that couples electron transfer with translocation of ions across the membrane. This is Ion-translocating oxidoreductase complex subunit E from Cronobacter sakazakii (strain ATCC BAA-894) (Enterobacter sakazakii).